Consider the following 293-residue polypeptide: 4-hydroxy-tetrahydrodipicolinate synthase (293 aa).

A pyruvate-binding site is contributed by Thr-46. Residue Tyr-133 is the Proton donor/acceptor of the active site. The active-site Schiff-base intermediate with substrate is the Lys-161. Val-202 lines the pyruvate pocket.

Belongs to the DapA family. In terms of assembly, homotetramer; dimer of dimers.

The protein localises to the cytoplasm. The enzyme catalyses L-aspartate 4-semialdehyde + pyruvate = (2S,4S)-4-hydroxy-2,3,4,5-tetrahydrodipicolinate + H2O + H(+). It functions in the pathway amino-acid biosynthesis; L-lysine biosynthesis via DAP pathway; (S)-tetrahydrodipicolinate from L-aspartate: step 3/4. In terms of biological role, catalyzes the condensation of (S)-aspartate-beta-semialdehyde [(S)-ASA] and pyruvate to 4-hydroxy-tetrahydrodipicolinate (HTPA). In Wolbachia pipientis wMel, this protein is 4-hydroxy-tetrahydrodipicolinate synthase.